Reading from the N-terminus, the 658-residue chain is Endoplasmic reticulum chaperone BiP (658 aa).

The N-terminal stretch at 1–19 (MVTMKLFALVLLVSASVFA) is a signal peptide. Residues 38-41 (GTTY), Lys-98, 228-230 (GGT), 294-301 (EKAKRALS), and 365-368 (GSTR) each bind ATP. A nucleotide-binding (NBD) region spans residues 127–281 (KPYIEVDIGD…KKKTGKDVRA (155 aa)). Residues 410 to 420 (QDTGDLVLLDV) are interdomain linker. The segment at 421–501 (CPLTLGIETV…PRGVPQIEVT (81 aa)) is substrate-binding (SBD). The disordered stretch occupies residues 634 to 658 (KLYGGAGAPPPEGAEGAEETEKDEL). Positions 648 to 658 (EGAEETEKDEL) are enriched in acidic residues. The Prevents secretion from ER motif lies at 655 to 658 (KDEL).

The protein belongs to the heat shock protein 70 family. In terms of assembly, monomer and homooligomer; homooligomerization via the interdomain linker inactivates the chaperone activity and acts as a storage of hspa5/BiP molecules. Interacts with DNAJC10. Interacts with dnajb9/ERdj4; leading to recruit hspa5/BiP to ern1/ire1. Interacts with ern1/ire1; interaction takes place following interaction with dnajb9/ERdj4 and leads to inactivate ern1/IRE1.

Its subcellular location is the endoplasmic reticulum lumen. The catalysed reaction is ATP + H2O = ADP + phosphate + H(+). The chaperone activity is regulated by ATP-induced allosteric coupling of the nucleotide-binding (NBD) and substrate-binding (SBD) domains. In the ADP-bound and nucleotide-free (apo) states, the two domains have little interaction. In contrast, in the ATP-bound state the two domains are tightly coupled, which results in drastically accelerated kinetics in both binding and release of polypeptide substrates. J domain-containing co-chaperones (dnajb9/ERdj4 or dnajc10/ERdj5) stimulate the ATPase activity and are required for efficient substrate recognition by hspa5/BiP. Homooligomerization inactivates participating hspa5/BiP protomers and probably act as reservoirs to store hspa5/BiP molecules when they are not needed by the cell. Its function is as follows. Endoplasmic reticulum chaperone that plays a key role in protein folding and quality control in the endoplasmic reticulum lumen. Involved in the correct folding of proteins and degradation of misfolded proteins via its interaction with dnajc10/ERdj5, probably to facilitate the release of dnajc10/ERdj5 from its substrate. Acts as a key repressor of the EIF2AK3/PERK and ERN1/IRE1-mediated unfolded protein response (UPR). In the unstressed endoplasmic reticulum, recruited by DNAJB9/ERdj4 to the luminal region of ERN1/IRE1, leading to disrupt the dimerization of ERN1/IRE1, thereby inactivating ERN1/IRE1. Also binds and inactivates EIF2AK3/PERK in unstressed cells. Accumulation of misfolded protein in the endoplasmic reticulum causes release of HSPA5/BiP from ERN1/IRE1 and EIF2AK3/PERK, allowing their homodimerization and subsequent activation. The sequence is that of Endoplasmic reticulum chaperone BiP from Xenopus laevis (African clawed frog).